The following is a 1692-amino-acid chain: Fatty acid synthase alpha subunit hexA (1692 aa).

Residues 44 to 80 form a disordered region; it reads AVEEPVDETPAPETAPERPPLSRAKTAAVKPQETAAP. Residues 90–174 enclose the Carrier domain; the sequence is LSAEEIVRAL…RVSSALLSKL (85 aa). An O-(pantetheine 4'-phosphoryl)serine modification is found at Ser-125. The segment at 508–746 is ketoreductase (KR) domain; sequence FAGKNILITG…IAMLMTPELV (239 aa). Residues 948–1430 enclose the Ketosynthase family 3 (KS3) domain; it reads KEYLHEVAVE…QKGGQVVGVA (483 aa). Cys-1135 acts as the For beta-ketoacyl synthase activity in catalysis. The interval 1263–1287 is disordered; sequence GQAQLDKSSPSTNTTSRTSSVSLAR. Residues 1270 to 1284 show a composition bias toward low complexity; that stretch reads SSPSTNTTSRTSSVS. Residues His-1315 and His-1356 each act as for beta-ketoacyl synthase activity in the active site. Position 1569 (Asp-1569) interacts with Mg(2+). Acetyl-CoA-binding positions include 1569-1571, 1615-1625, 1639-1642, and 1668-1670; these read DLV, EAVFKCLHTQT, KSDN, and ISH. Ser-1669 lines the Mg(2+) pocket.

The protein belongs to the thiolase-like superfamily. Fungal fatty acid synthetase subunit alpha family. In terms of assembly, [Alpha(6)beta(6)] hexamers of two multifunctional subunits (alpha and beta). In terms of processing, 4'-phosphopantetheine is transferred from CoA to a specific serine of the acyl carrier domain by the C-terminal PPT domain. This modification is essential for activity because fatty acids are bound in thioester linkage to the sulfhydryl of the prosthetic group.

The catalysed reaction is acetyl-CoA + n malonyl-CoA + 2n NADPH + 4n H(+) = a long-chain-acyl-CoA + n CoA + n CO2 + 2n NADP(+).. It catalyses the reaction a fatty acyl-[ACP] + malonyl-[ACP] + H(+) = a 3-oxoacyl-[ACP] + holo-[ACP] + CO2. It carries out the reaction a (3R)-hydroxyacyl-[ACP] + NADP(+) = a 3-oxoacyl-[ACP] + NADPH + H(+). Its pathway is mycotoxin biosynthesis. Functionally, fatty acid synthase alpha subunit; part of the fragmented gene cluster that mediates the biosynthesis of dothistromin (DOTH), a polyketide toxin very similar in structure to the aflatoxin precursor, versicolorin B. The first step of the pathway is the conversion of acetate to norsolorinic acid (NOR) and requires the fatty acid synthase subunits hexA and hexB, as well as the polyketide synthase pksA. PksA combines a hexanoyl starter unit and 7 malonyl-CoA extender units to synthesize the precursor NOR. The hexanoyl starter unit is provided to the acyl-carrier protein (ACP) domain by the fungal fatty acid synthase hexA/hexB. The second step is the conversion of NOR to averantin (AVN) and requires the norsolorinic acid ketoreductase nor1, which catalyzes the dehydration of norsolorinic acid to form (1'S)-averantin. The cytochrome P450 monooxygenase avnA then catalyzes the hydroxylation of AVN to 5'hydroxyaverantin (HAVN). The next step is performed by adhA that transforms HAVN to averufin (AVF). Averufin might then be converted to hydroxyversicolorone by cypX and avfA. Hydroxyversicolorone is further converted versiconal hemiacetal acetate (VHA) by moxY. VHA is then the substrate for the versiconal hemiacetal acetate esterase est1 to yield versiconal (VAL). Versicolorin B synthase vbsA then converts VAL to versicolorin B (VERB) by closing the bisfuran ring. Then, the activity of the versicolorin B desaturase verB leads to versicolorin A (VERA). DotB, a predicted chloroperoxidase, may perform epoxidation of the A-ring of VERA. Alternatively, a cytochrome P450, such as cypX or avnA could catalyze this step. It is also possible that another, uncharacterized, cytochrome P450 enzyme is responsible for this step. Opening of the epoxide could potentially be achieved by the epoxide hydrolase epoA. However, epoA seems not to be required for DOTH biosynthesis, but other epoxide hydrolases may have the ability to complement this hydrolysis. Alternatively, opening of the epoxide ring could be achieved non-enzymatically. The next step is the deoxygenation of ring A to yield the 5,8-dihydroxyanthraquinone which is most likely catalyzed by the NADPH dehydrogenase encoded by ver1. The last stages of DOTH biosynthesis are proposed to involve hydroxylation of the bisfuran. OrdB and norB might have oxidative roles here. An alternative possibility is that cytochrome P450 monoogenases such as avnA and cypX might perform these steps in addition to previously proposed steps. In Dothistroma septosporum (strain NZE10 / CBS 128990) (Red band needle blight fungus), this protein is Fatty acid synthase alpha subunit hexA.